Consider the following 140-residue polypeptide: uncharacterized protein (140 aa).

This is an uncharacterized protein from Archaeoglobus fulgidus (strain ATCC 49558 / DSM 4304 / JCM 9628 / NBRC 100126 / VC-16).